A 37-amino-acid polypeptide reads, in one-letter code: Large ribosomal subunit protein bL36 (37 aa).

This sequence belongs to the bacterial ribosomal protein bL36 family.

In Streptomyces griseus subsp. griseus (strain JCM 4626 / CBS 651.72 / NBRC 13350 / KCC S-0626 / ISP 5235), this protein is Large ribosomal subunit protein bL36.